Consider the following 330-residue polypeptide: PTS system mannose-specific EIIAB component (330 aa).

Residues 2–130 (GIGIIIASHG…NIIKESKDGI (129 aa)) enclose the PTS EIIA type-4 domain. H10 (tele-phosphohistidine intermediate; for EIIA activity) is an active-site residue. A Phosphohistidine; by HPr modification is found at H10. Residues 143-161 (TAATEKVVNALQGAIPAGT) form a hinge region. The region spanning 166 to 330 (GKLKINLARV…FELIQKANIK (165 aa)) is the PTS EIIB type-4 domain. The active-site Pros-phosphohistidine intermediate; for EIIB activity is the H181. The residue at position 181 (H181) is a Phosphohistidine; by EIIA.

Homodimer.

It localises to the cytoplasm. The protein resides in the cell membrane. The catalysed reaction is D-mannose(out) + N(pros)-phospho-L-histidyl-[protein] = D-mannose 6-phosphate(in) + L-histidyl-[protein]. Functionally, the phosphoenolpyruvate-dependent sugar phosphotransferase system (sugar PTS), a major carbohydrate active transport system, catalyzes the phosphorylation of incoming sugar substrates concomitantly with their translocation across the cell membrane. The enzyme II ManXYZ PTS system is involved in mannose transport. The sequence is that of PTS system mannose-specific EIIAB component from Streptococcus pyogenes serotype M6 (strain ATCC BAA-946 / MGAS10394).